Reading from the N-terminus, the 446-residue chain is uncharacterized protein (446 aa).

12 helical membrane passes run 20–40, 42–62, 95–115, 127–147, 160–180, 205–225, 237–257, 284–304, 331–351, 355–375, 388–408, and 414–434; these read LIGVGCTIGTGFFLGSSIAIV, SGFSVLLSFLIAGIGTYFVFE, WVYWTSEMLITGSQLTAISLF, VFASIYAVLGLLIIFTGLSVF, AAIFMFIVIAILALCGILSGG, LIYAFYAFGGIEVMGLMAVHL, LMLATLAIIYIISIGLALLLV, IFNGIFIIAGFSTLVASLFAV, WPALGLTFAGLVLSIILSLVL, IYEHMTTAAGLMLLYTWLFIL, GKTQIYLAMVLIAAAVSGTLF, and PGFFVSIGFLVIIAIVTMIYQ.

Belongs to the amino acid-polyamine-organocation (APC) superfamily.

The protein localises to the cell membrane. This is an uncharacterized protein from Bacillus subtilis (strain 168).